Reading from the N-terminus, the 689-residue chain is Solute carrier organic anion transporter family member 1B2 (689 aa).

Over 1 to 26 (MDQTQHPSKAAQPLRSEKTRHCDGFR) the chain is Cytoplasmic. Residues 27 to 46 (IFLAALSFSYICKALGGVIM) form a helical membrane-spanning segment. Residues 47-65 (KSSITQIERRFDIPSSISG) are Extracellular-facing. Residues 66–86 (LIDGGFEIGNLLVIVFVSYFG) traverse the membrane as a helical segment. Topologically, residues 87–92 (SKLHRP) are cytoplasmic. The chain crosses the membrane as a helical span at residues 93–117 (KLIGTGCFIMGIGSILTALPHFFMG). The Extracellular portion of the chain corresponds to 118 to 163 (YYRYATENDISSLHNSTLTCLVNQTTSLTGTSPEIMEKGCEKGSNS). Residues Asn132 and Asn140 are each glycosylated (N-linked (GlcNAc...) asparagine). Residues 164–192 (YTWIYVLMGNMLRGIGETPIVPLGVSYID) traverse the membrane as a helical segment. At 193–211 (DFAKEGNSSMYLGTLHTIA) the chain is on the cytoplasmic side. Residues 212–232 (MIGPILGFIMSSVFAKLYVDV) form a helical membrane-spanning segment. At 233 to 250 (GYVDLRSVRITPQDARWV) the chain is on the extracellular side. A helical membrane pass occupies residues 251 to 275 (GAWWLGFIVNGLLCIICSIPFFFLP). Over 276-326 (KIPKRSQKERKNSASLHVLKTDEDKNPVTNPTTQEKQAPANLTGFLWSLRS) the chain is Cytoplasmic. Ser288 and Ser290 each carry phosphoserine. The chain crosses the membrane as a helical span at residues 327 to 348 (ILTNEQYVIFLILTLLQISSFI). Residues 349–368 (GSFTYLFKFIEQQFGQTASQ) lie on the Extracellular side of the membrane. The chain crosses the membrane as a helical span at residues 369-392 (ANFLLGVITIPTMASGMFLGGYLI). At 393–396 (KRLK) the chain is on the cytoplasmic side. Residues 397–420 (LTLLGITKFVFFTTTMAYVFYLSY) traverse the membrane as a helical segment. Residues 421 to 533 (FLLICENKAF…DKCKTKYYFY (113 aa)) lie on the Extracellular side of the membrane. Residues 448–505 (DVPLSYCNSDCICDKNQWEPVCGENGVTYISPCLAGCKSFRGDKKLMNIEFYDCSCVS) enclose the Kazal-like domain. 3 disulfides stabilise this stretch: Cys454/Cys484, Cys460/Cys480, and Cys469/Cys503. A glycan (N-linked (GlcNAc...) asparagine) is linked at Asn513. Residues 534-556 (ITFQVIISFFTALGSTSLMLILI) traverse the membrane as a helical segment. The Cytoplasmic segment spans residues 557 to 565 (RSVQPELKS). A helical transmembrane segment spans residues 566-591 (LGMGFHSLVVRTLGGILAPVYYGALI). The Extracellular portion of the chain corresponds to 592–625 (DRTCMKWSVTSCGARGACRLYNSRLFGMIYVGLS). Residues 626-643 (IALKTPILLLYVALIYVM) traverse the membrane as a helical segment. Topologically, residues 644–689 (KRKMKRNDNKILENGRKFTDEGNPEPVNNNGYSCVPSDEKNSETPL) are cytoplasmic. Positions 658 to 689 (GRKFTDEGNPEPVNNNGYSCVPSDEKNSETPL) are disordered. Phosphothreonine is present on Thr662. Ser680 is subject to Phosphoserine. Positions 680–689 (SDEKNSETPL) are enriched in basic and acidic residues.

Belongs to the organo anion transporter (TC 2.A.60) family. As to expression, liver specific.

It is found in the cell membrane. It catalyses the reaction estrone 3-sulfate(out) = estrone 3-sulfate(in). The enzyme catalyses taurocholate(out) = taurocholate(in). The catalysed reaction is prostaglandin E2(out) = prostaglandin E2(in). It carries out the reaction L-thyroxine(out) = L-thyroxine(in). In terms of biological role, mediates the Na(+)-independent uptake of organic anions such as taurochlate, bromosulfophthalein and steroid conjugates (estrone 3-sulfate, 17-beta-glucuronosyl estradiol, dehydroepiandrosterone sulfate). Also transports prostaglandin E2 and L-thyroxine (T4). Shows a pH-sensitive substrate specificity which may be ascribed to the protonation state of the binding site and leads to a stimulation of substrate transport in an acidic microenvironment. Hydrogencarbonate/HCO3(-) acts as the probable counteranion that exchanges for organic anions. The chain is Solute carrier organic anion transporter family member 1B2 (Slco1b2) from Mus musculus (Mouse).